The sequence spans 161 residues: Peroxynitrite isomerase 1 (161 aa).

Positions 17–23 match the GXWXGXG motif; sequence GTWTGRG. Position 152 (His152) interacts with heme b.

The protein belongs to the nitrobindin family. As to quaternary structure, homodimer. Requires heme b as cofactor.

It catalyses the reaction peroxynitrite = nitrate. It participates in nitrogen metabolism. Heme-binding protein able to scavenge peroxynitrite and to protect free L-tyrosine against peroxynitrite-mediated nitration, by acting as a peroxynitrite isomerase that converts peroxynitrite to nitrate. Therefore, this protein likely plays a role in peroxynitrite sensing and in the detoxification of reactive nitrogen and oxygen species (RNS and ROS, respectively). Is able to bind nitric oxide (NO) in vitro, but may act as a sensor of peroxynitrite levels in vivo. This chain is Peroxynitrite isomerase 1, found in Mycolicibacterium paratuberculosis (strain ATCC BAA-968 / K-10) (Mycobacterium paratuberculosis).